Here is a 294-residue protein sequence, read N- to C-terminus: Undecaprenyl-diphosphatase (294 aa).

6 consecutive transmembrane segments (helical) span residues 39 to 59 (PGAA…ILYF), 93 to 113 (ATLG…GFTL), 123 to 143 (NLWI…MVDA), 198 to 218 (SFLM…IKAV), 232 to 252 (PTLV…IGFL), and 268 to 288 (IGLA…AIDP).

It belongs to the UppP family.

Its subcellular location is the cell membrane. The enzyme catalyses di-trans,octa-cis-undecaprenyl diphosphate + H2O = di-trans,octa-cis-undecaprenyl phosphate + phosphate + H(+). Functionally, catalyzes the dephosphorylation of undecaprenyl diphosphate (UPP). Confers resistance to bacitracin. The chain is Undecaprenyl-diphosphatase from Bifidobacterium longum (strain DJO10A).